The primary structure comprises 285 residues: Urease accessory protein UreD 1 (285 aa).

The protein belongs to the UreD family. In terms of assembly, ureD, UreF and UreG form a complex that acts as a GTP-hydrolysis-dependent molecular chaperone, activating the urease apoprotein by helping to assemble the nickel containing metallocenter of UreC. The UreE protein probably delivers the nickel.

It is found in the cytoplasm. Required for maturation of urease via the functional incorporation of the urease nickel metallocenter. This chain is Urease accessory protein UreD 1, found in Pseudomonas syringae pv. tomato (strain ATCC BAA-871 / DC3000).